A 65-amino-acid chain; its full sequence is Large ribosomal subunit protein bL35 (65 aa).

Positions 1–28 (MPKIKTNRGAAKRFRKTGSGKIRRNKAF) are disordered. Residues 10–26 (AAKRFRKTGSGKIRRNK) show a composition bias toward basic residues.

It belongs to the bacterial ribosomal protein bL35 family.

This chain is Large ribosomal subunit protein bL35, found in Syntrophotalea carbinolica (strain DSM 2380 / NBRC 103641 / GraBd1) (Pelobacter carbinolicus).